A 385-amino-acid polypeptide reads, in one-letter code: Aldehyde dehydrogenase family 3 member B2 (385 aa).

An NAD(+)-binding site is contributed by 107 to 112 (GSPRVG). Residues Glu129 and Cys163 contribute to the active site. Cys382 carries the post-translational modification Cysteine methyl ester. A lipid anchor (S-geranylgeranyl cysteine) is attached at Cys382. Positions 383-385 (TLL) are cleaved as a propeptide — removed in mature form.

This sequence belongs to the aldehyde dehydrogenase family. Post-translationally, geranylgeranylation is important for localization to lipid droplets and enzyme activity. As to expression, salivary gland. Expressed at protein level in placenta.

It is found in the lipid droplet. It catalyses the reaction an aldehyde + NAD(+) + H2O = a carboxylate + NADH + 2 H(+). The enzyme catalyses a long-chain fatty aldehyde + NAD(+) + H2O = a long-chain fatty acid + NADH + 2 H(+). It carries out the reaction a medium-chain fatty aldehyde + NAD(+) + H2O = a medium-chain fatty acid + NADH + 2 H(+). The catalysed reaction is hexadecanoate + NADH + 2 H(+) = hexadecanal + NAD(+) + H2O. It catalyses the reaction octanal + NAD(+) + H2O = octanoate + NADH + 2 H(+). It functions in the pathway alcohol metabolism; ethanol degradation; acetate from ethanol: step 2/2. In terms of biological role, oxidizes medium and long chain fatty aldehydes in lipid droplets into non-toxic fatty acids. The protein is Aldehyde dehydrogenase family 3 member B2 (ALDH3B2) of Homo sapiens (Human).